A 137-amino-acid chain; its full sequence is Small ribosomal subunit protein uS12 (137 aa).

A disordered region spans residues 1–57; the sequence is MPTINQLVRKPRKSKTKQSDSPVLNRGFNSKKKQFTNLNSPQKRGVCTRVGTMTPRK. 3-methylthioaspartic acid is present on Asp102. Residues 118–137 form a disordered region; sequence SGVDGRRQGRSLYGTKKPKN.

This sequence belongs to the universal ribosomal protein uS12 family. Part of the 30S ribosomal subunit. Contacts proteins S8 and S17. May interact with IF1 in the 30S initiation complex.

Functionally, with S4 and S5 plays an important role in translational accuracy. Interacts with and stabilizes bases of the 16S rRNA that are involved in tRNA selection in the A site and with the mRNA backbone. Located at the interface of the 30S and 50S subunits, it traverses the body of the 30S subunit contacting proteins on the other side and probably holding the rRNA structure together. The combined cluster of proteins S8, S12 and S17 appears to hold together the shoulder and platform of the 30S subunit. This chain is Small ribosomal subunit protein uS12, found in Staphylococcus epidermidis (strain ATCC 12228 / FDA PCI 1200).